Consider the following 272-residue polypeptide: 4-hydroxy-tetrahydrodipicolinate reductase (272 aa).

NAD(+) is bound by residues 11–16 (GAGGRM) and Glu37. Arg38 serves as a coordination point for NADP(+). NAD(+)-binding positions include 101–103 (GTT) and 125–128 (AANF). The active-site Proton donor/acceptor is the His158. His159 is a binding site for (S)-2,3,4,5-tetrahydrodipicolinate. Lys162 functions as the Proton donor in the catalytic mechanism. 168–169 (GT) contacts (S)-2,3,4,5-tetrahydrodipicolinate.

It belongs to the DapB family. In terms of assembly, homotetramer.

Its subcellular location is the cytoplasm. The catalysed reaction is (S)-2,3,4,5-tetrahydrodipicolinate + NAD(+) + H2O = (2S,4S)-4-hydroxy-2,3,4,5-tetrahydrodipicolinate + NADH + H(+). It carries out the reaction (S)-2,3,4,5-tetrahydrodipicolinate + NADP(+) + H2O = (2S,4S)-4-hydroxy-2,3,4,5-tetrahydrodipicolinate + NADPH + H(+). It functions in the pathway amino-acid biosynthesis; L-lysine biosynthesis via DAP pathway; (S)-tetrahydrodipicolinate from L-aspartate: step 4/4. In terms of biological role, catalyzes the conversion of 4-hydroxy-tetrahydrodipicolinate (HTPA) to tetrahydrodipicolinate. The polypeptide is 4-hydroxy-tetrahydrodipicolinate reductase (Edwardsiella ictaluri (strain 93-146)).